The primary structure comprises 208 residues: Inactive ribonuclease-like protein 10 (208 aa).

Residues 1 to 24 (MKVTLVHLLFMMLLLLLGLGLGLG) form the signal peptide. Residues Asn125 and Asn147 are each glycosylated (N-linked (GlcNAc...) asparagine).

This sequence belongs to the pancreatic ribonuclease family. Post-translationally, the N-terminus is blocked. Glycosylated. Male-specific expression in proximal caput of the epididymis (at protein level).

The protein resides in the secreted. In terms of biological role, secreted proximal epididymal protein required for post-testicular sperm maturation and male fertility. May be involved in sperm adhesion to the egg zona pellucida. Does not have ribonuclease activity. In Mus musculus (Mouse), this protein is Inactive ribonuclease-like protein 10 (Rnase10).